The sequence spans 190 residues: Small ribosomal subunit protein mS23 (190 aa).

Ala2 bears the N-acetylalanine mark. Lys102 is modified (N6-acetyllysine). The segment at 139–190 (RTQHGGSHVSRKSEHLSVRPQTALEENETQKEVPQDQHLEAPADQSKGLLPP) is disordered. The segment covering 166-179 (ETQKEVPQDQHLEA) has biased composition (basic and acidic residues).

Belongs to the mitochondrion-specific ribosomal protein mS23 family. Component of the mitochondrial small ribosomal subunit (mt-SSU). Mature mammalian 55S mitochondrial ribosomes consist of a small (28S) and a large (39S) subunit. The 28S small subunit contains a 12S ribosomal RNA (12S mt-rRNA) and 30 different proteins. The 39S large subunit contains a 16S rRNA (16S mt-rRNA), a copy of mitochondrial valine transfer RNA (mt-tRNA(Val)), which plays an integral structural role, and 52 different proteins.

It is found in the mitochondrion. This Homo sapiens (Human) protein is Small ribosomal subunit protein mS23 (MRPS23).